Consider the following 237-residue polypeptide: DNA repair protein RecO (237 aa).

Belongs to the RecO family.

Its function is as follows. Involved in DNA repair and RecF pathway recombination. The sequence is that of DNA repair protein RecO from Rickettsia africae (strain ESF-5).